The sequence spans 279 residues: Probable endonuclease 4 (279 aa).

Zn(2+) is bound by residues His66, His106, Glu142, Asp175, His178, His212, Asp225, His227, and Glu257.

It belongs to the AP endonuclease 2 family. The cofactor is Zn(2+).

It catalyses the reaction Endonucleolytic cleavage to 5'-phosphooligonucleotide end-products.. Its function is as follows. Endonuclease IV plays a role in DNA repair. It cleaves phosphodiester bonds at apurinic or apyrimidinic (AP) sites, generating a 3'-hydroxyl group and a 5'-terminal sugar phosphate. The sequence is that of Probable endonuclease 4 from Moorella thermoacetica (strain ATCC 39073 / JCM 9320).